A 569-amino-acid polypeptide reads, in one-letter code: Carboxylesterase 3 (569 aa).

The signal sequence occupies residues 1-24 (MRLHRLRARLNAVAFGLLLLLVHG). A disulfide bond links C95 and C122. N103 carries an N-linked (GlcNAc...) asparagine glycan. Catalysis depends on S227, which acts as the Acyl-ester intermediate. Cysteines 279 and 290 form a disulfide. Active-site charge relay system residues include E345 and H458. The short motif at 566-569 (QEDL) is the Prevents secretion from ER element.

It belongs to the type-B carboxylesterase/lipase family. Post-translationally, N-glycosylated.

It is found in the endoplasmic reticulum lumen. It carries out the reaction a carboxylic ester + H2O = an alcohol + a carboxylate + H(+). Its function is as follows. Involved in the detoxification of xenobiotics and in the activation of ester and amide prodrugs. The protein is Carboxylesterase 3 (CES3) of Pongo abelii (Sumatran orangutan).